The chain runs to 126 residues: FCS-Like Zinc finger 17 (126 aa).

Residues 41–85 (CFLKTCHLCNKQLHQDKDVYMYRGDLGFCSRECRESQMLIDDRKE) form an FLZ-type zinc finger.

This sequence belongs to the FLZ family. Interacts with KIN10 and KIN11 via its FLZ-type zinc finger domain. Forms heterodimer with FLZ2 in vitro.

Its subcellular location is the nucleus. The protein localises to the cytoplasm. Its function is as follows. May act as an adapter to facilitate the interaction of SnRK1 complex with effector proteins, conferring tissue- and stimulus-type specific differences in the SnRK1 regulation pathway. This Arabidopsis thaliana (Mouse-ear cress) protein is FCS-Like Zinc finger 17.